The chain runs to 205 residues: Ephrin-A1 (205 aa).

The N-terminal stretch at 1-17 is a signal peptide; it reads MEFLWAPLLGLCCSLAA. Residues 18-151 enclose the Ephrin RBD domain; sequence ADRHIVFWNS…KLKVTVNGKI (134 aa). The N-linked (GlcNAc...) asparagine glycan is linked to N26. 2 cysteine pairs are disulfide-bonded: C51/C92 and C80/C140. The GPI-anchor amidated serine moiety is linked to residue S182. A propeptide spans 183-205 (removed in mature form); that stretch reads AAPRLFPLVWAVLLLPLLLLQTQ.

It belongs to the ephrin family. As to quaternary structure, monomer. Homodimer. Forms heterodimers with EPHA2. Binds to the receptor tyrosine kinases EPHA2, EPHA3, EPHA4, EPHA5, EPHA6 and EPHA7. Also binds with low affinity to EPHA1. Undergoes proteolysis by a metalloprotease to give rise to a soluble monomeric form. In terms of processing, N-Glycosylation is required for binding to EPHA2 receptor and inducing its internalization.

Its subcellular location is the cell membrane. The protein localises to the secreted. Its function is as follows. Cell surface GPI-bound ligand for Eph receptors, a family of receptor tyrosine kinases which are crucial for migration, repulsion and adhesion during neuronal, vascular and epithelial development. Binds promiscuously Eph receptors residing on adjacent cells, leading to contact-dependent bidirectional signaling into neighboring cells. Plays an important role in angiogenesis and tumor neovascularization. The recruitment of VAV2, VAV3 and PI3-kinase p85 subunit by phosphorylated EPHA2 is critical for EFNA1-induced RAC1 GTPase activation and vascular endothelial cell migration and assembly. Exerts anti-oncogenic effects in tumor cells through activation and down-regulation of EPHA2. Activates EPHA2 by inducing tyrosine phosphorylation which leads to its internalization and degradation. Acts as a negative regulator in the tumorigenesis of gliomas by down-regulating EPHA2 and FAK. Can evoke collapse of embryonic neuronal growth cone and regulates dendritic spine morphogenesis. This is Ephrin-A1 (Efna1) from Rattus norvegicus (Rat).